A 271-amino-acid polypeptide reads, in one-letter code: Formamidopyrimidine-DNA glycosylase (271 aa).

The active-site Schiff-base intermediate with DNA is Pro2. The Proton donor role is filled by Glu3. Catalysis depends on Lys57, which acts as the Proton donor; for beta-elimination activity. Residues His90, Arg109, and Lys151 each contribute to the DNA site. Residues 236–270 form an FPG-type zinc finger; that stretch reads HVYGRGGETCTSCGNLLSEIRLGQRTTVFCGICQT. The Proton donor; for delta-elimination activity role is filled by Arg260.

The protein belongs to the FPG family. As to quaternary structure, monomer. Zn(2+) is required as a cofactor.

It catalyses the reaction Hydrolysis of DNA containing ring-opened 7-methylguanine residues, releasing 2,6-diamino-4-hydroxy-5-(N-methyl)formamidopyrimidine.. It carries out the reaction 2'-deoxyribonucleotide-(2'-deoxyribose 5'-phosphate)-2'-deoxyribonucleotide-DNA = a 3'-end 2'-deoxyribonucleotide-(2,3-dehydro-2,3-deoxyribose 5'-phosphate)-DNA + a 5'-end 5'-phospho-2'-deoxyribonucleoside-DNA + H(+). Its function is as follows. Involved in base excision repair of DNA damaged by oxidation or by mutagenic agents. Acts as a DNA glycosylase that recognizes and removes damaged bases. Has a preference for oxidized purines, such as 7,8-dihydro-8-oxoguanine (8-oxoG). Has AP (apurinic/apyrimidinic) lyase activity and introduces nicks in the DNA strand. Cleaves the DNA backbone by beta-delta elimination to generate a single-strand break at the site of the removed base with both 3'- and 5'-phosphates. The protein is Formamidopyrimidine-DNA glycosylase of Shewanella baltica (strain OS155 / ATCC BAA-1091).